The primary structure comprises 882 residues: Alanine--tRNA ligase (882 aa).

His-570, His-574, Cys-672, and His-676 together coordinate Zn(2+).

The protein belongs to the class-II aminoacyl-tRNA synthetase family. Zn(2+) serves as cofactor.

It is found in the cytoplasm. It carries out the reaction tRNA(Ala) + L-alanine + ATP = L-alanyl-tRNA(Ala) + AMP + diphosphate. Its function is as follows. Catalyzes the attachment of alanine to tRNA(Ala) in a two-step reaction: alanine is first activated by ATP to form Ala-AMP and then transferred to the acceptor end of tRNA(Ala). Also edits incorrectly charged Ser-tRNA(Ala) and Gly-tRNA(Ala) via its editing domain. The sequence is that of Alanine--tRNA ligase from Xanthomonas axonopodis pv. citri (strain 306).